The following is a 236-amino-acid chain: NLP effector protein 3 (236 aa).

A signal peptide spans 1-19; that stretch reads MNLLGFLAVVALSTASVQA. The short motif at 103-113 is the Conserved undecapeptide motif I element; the sequence is AIMYSWYFPKD. A Hepta-peptide GHRHDWE motif II motif is present at residues 120-126; sequence GHRHDWE.

Belongs to the Necrosis inducing protein (NPP1) family.

The protein resides in the secreted. Secreted effector that contributes to virulence during infection by P.capsici. Induces distinct chlorosis at 3 days after inoculation of host C.annuum leaves, and all the chlorotic areas gradually turn brown and become moderately necrotic at 7 days after inoculation. Leads only to chlorotic areas, without necrosis at 7 days after non-host N.benthamiana leaves infection. Induces cell death in hot pepper. This is NLP effector protein 3 from Phytophthora capsici.